Consider the following 487-residue polypeptide: Bifunctional protein GlmU (487 aa).

The tract at residues 1–240 (MAEVTNCAAI…PEELSGVNDR (240 aa)) is pyrophosphorylase. UDP-N-acetyl-alpha-D-glucosamine is bound by residues 12–15 (LAAG), Lys26, Gln83, and 88–89 (GT). Asp113 lines the Mg(2+) pocket. UDP-N-acetyl-alpha-D-glucosamine contacts are provided by Gly150, Glu165, Asn180, and Asn238. Asn238 lines the Mg(2+) pocket. The segment at 241-261 (VQLAAAGRLLNRRMVEEAMRG) is linker. Positions 262–487 (GTTIVDPDTT…DAKANDQTTN (226 aa)) are N-acetyltransferase. The UDP-N-acetyl-alpha-D-glucosamine site is built by Arg343 and Lys361. His373 acts as the Proton acceptor in catalysis. UDP-N-acetyl-alpha-D-glucosamine-binding residues include Tyr376 and Asn387. Residues Ala390, 396–397 (NY), Ser415, and Ala433 each bind acetyl-CoA. The tract at residues 449-487 (SGGKQRNIEGWVQKKRPGTPAAEAAGKAQDAKANDQTTN) is disordered.

This sequence in the N-terminal section; belongs to the N-acetylglucosamine-1-phosphate uridyltransferase family. In the C-terminal section; belongs to the transferase hexapeptide repeat family. In terms of assembly, homotrimer. Requires Mg(2+) as cofactor.

The protein localises to the cytoplasm. The enzyme catalyses alpha-D-glucosamine 1-phosphate + acetyl-CoA = N-acetyl-alpha-D-glucosamine 1-phosphate + CoA + H(+). It catalyses the reaction N-acetyl-alpha-D-glucosamine 1-phosphate + UTP + H(+) = UDP-N-acetyl-alpha-D-glucosamine + diphosphate. It participates in nucleotide-sugar biosynthesis; UDP-N-acetyl-alpha-D-glucosamine biosynthesis; N-acetyl-alpha-D-glucosamine 1-phosphate from alpha-D-glucosamine 6-phosphate (route II): step 2/2. The protein operates within nucleotide-sugar biosynthesis; UDP-N-acetyl-alpha-D-glucosamine biosynthesis; UDP-N-acetyl-alpha-D-glucosamine from N-acetyl-alpha-D-glucosamine 1-phosphate: step 1/1. It functions in the pathway bacterial outer membrane biogenesis; LPS lipid A biosynthesis. Its function is as follows. Catalyzes the last two sequential reactions in the de novo biosynthetic pathway for UDP-N-acetylglucosamine (UDP-GlcNAc). The C-terminal domain catalyzes the transfer of acetyl group from acetyl coenzyme A to glucosamine-1-phosphate (GlcN-1-P) to produce N-acetylglucosamine-1-phosphate (GlcNAc-1-P), which is converted into UDP-GlcNAc by the transfer of uridine 5-monophosphate (from uridine 5-triphosphate), a reaction catalyzed by the N-terminal domain. This chain is Bifunctional protein GlmU, found in Corynebacterium aurimucosum (strain ATCC 700975 / DSM 44827 / CIP 107346 / CN-1) (Corynebacterium nigricans).